Here is a 57-residue protein sequence, read N- to C-terminus: Large ribosomal subunit protein bL32 (57 aa).

The segment at 1–23 is disordered; the sequence is MAVPKKKTSKSKRDKRRATWRHK.

Belongs to the bacterial ribosomal protein bL32 family.

The polypeptide is Large ribosomal subunit protein bL32 (Nostoc sp. (strain PCC 7120 / SAG 25.82 / UTEX 2576)).